The sequence spans 609 residues: Elongation factor 4 (609 aa).

The 183-residue stretch at 5-187 (SKIRNFSIIA…AIVAKIPPPE (183 aa)) folds into the tr-type G domain. GTP is bound by residues 17-22 (DHGKST) and 134-137 (NKID).

The protein belongs to the TRAFAC class translation factor GTPase superfamily. Classic translation factor GTPase family. LepA subfamily.

Its subcellular location is the cell inner membrane. It catalyses the reaction GTP + H2O = GDP + phosphate + H(+). Required for accurate and efficient protein synthesis under certain stress conditions. May act as a fidelity factor of the translation reaction, by catalyzing a one-codon backward translocation of tRNAs on improperly translocated ribosomes. Back-translocation proceeds from a post-translocation (POST) complex to a pre-translocation (PRE) complex, thus giving elongation factor G a second chance to translocate the tRNAs correctly. Binds to ribosomes in a GTP-dependent manner. This is Elongation factor 4 from Erythrobacter litoralis (strain HTCC2594).